The sequence spans 412 residues: GATOR complex protein NPRL2 (412 aa).

It belongs to the NPR2 family. As to quaternary structure, component of the GATOR complex consisting of mio, Nup44A/Seh1, Im11, Nplr3, Nplr2, Wdr24, Wdr59 and Sec13. Within the GATOR complex, probable component of the GATOR1 subcomplex which is likely composed of Iml1, Nplr2 and Nplr3. Interacts with Nprl3.

It is found in the cytoplasm. The protein localises to the lysosome. In terms of biological role, an essential component of the GATOR subcomplex GATOR1 which functions as an inhibitor of the amino acid-sensing branch of the TORC1 signaling pathway. The two GATOR subcomplexes, GATOR1 and GATOR2, regulate the TORC1 pathway in order to mediate metabolic homeostasis, female gametogenesis and the response to amino acid limitation and complete starvation. The function of GATOR1 in negatively regulating the TORC1 pathway is essential for maintaining baseline levels of TORC1 activity under nutrient rich conditions, and for promoting survival during amino acid or complete starvation by inhibiting TORC1-dependent cell growth and promoting catabolic metabolism and autophagy. In addition, this inhibition of TORC1 is necessary to maintain female fertility under normal conditions and during periods of nutrient stress. GATOR1 and GATOR2 act at different stages of oogenesis to regulate TORC1 in order to control meiotic entry and promote oocyte growth and development. After exactly four mitotic cyst divisions, the GATOR1 complex members (Iml1, Nprl2 and Nprl3) down-regulate TORC1 to slow cellular metabolism and promote the mitotic/meiotic transition. At later stages of oogenesis, the mio and Nup44A components of the GATOR2 complex inhibit GATOR1 and thus activate TORC1 to promote meiotic progression, and drive oocyte growth and development. The polypeptide is GATOR complex protein NPRL2 (Drosophila melanogaster (Fruit fly)).